Reading from the N-terminus, the 212-residue chain is External core antigen (212 aa).

The N-terminal stretch at 1 to 19 is a signal peptide; sequence MQLFHLCLIISCSCPTVQA. An HBEAG region spans residues 25-27; it reads GWL. Positions 165-212 are disordered; it reads NAPILSTLPETTVVRRRGRSPRRRTPSPRRRRSQSPRRRRSQSPASQC. Positions 178–205 are enriched in basic residues; it reads VRRRGRSPRRRTPSPRRRRSQSPRRRRS. The stretch at 184-190 is one 1; half-length repeat; the sequence is SPRRRTP. The 3 X 8 AA repeats of S-P-R-R-R-R-S-Q stretch occupies residues 184–206; the sequence is SPRRRTPSPRRRRSQSPRRRRSQ. The propeptide occupies 184-212; that stretch reads SPRRRTPSPRRRRSQSPRRRRSQSPASQC. 2 tandem repeats follow at residues 191–198 and 199–206.

The protein belongs to the orthohepadnavirus precore antigen family. In terms of assembly, homodimerizes. In terms of processing, phosphorylated. Post-translationally, cleaved by host furin.

It is found in the secreted. The protein resides in the host nucleus. In terms of biological role, may regulate immune response to the intracellular capsid in acting as a T-cell tolerogen, by having an immunoregulatory effect which prevents destruction of infected cells by cytotoxic T-cells. This immune regulation may predispose to chronicity during perinatal infections and prevent severe liver injury during adult infections. The sequence is that of External core antigen from Gibbon hepatitis B virus subtype ayw3q (isolate Hope) (HBVgbn).